The chain runs to 636 residues: 1-deoxy-D-xylulose-5-phosphate synthase (636 aa).

Residues His-74 and 115–117 (AHS) each bind thiamine diphosphate. Asp-146 is a Mg(2+) binding site. Residues 147-148 (GS), Asn-176, Tyr-287, and Glu-369 each bind thiamine diphosphate. Asn-176 is a binding site for Mg(2+).

The protein belongs to the transketolase family. DXPS subfamily. Homodimer. Mg(2+) serves as cofactor. It depends on thiamine diphosphate as a cofactor.

The enzyme catalyses D-glyceraldehyde 3-phosphate + pyruvate + H(+) = 1-deoxy-D-xylulose 5-phosphate + CO2. Its pathway is metabolic intermediate biosynthesis; 1-deoxy-D-xylulose 5-phosphate biosynthesis; 1-deoxy-D-xylulose 5-phosphate from D-glyceraldehyde 3-phosphate and pyruvate: step 1/1. In terms of biological role, catalyzes the acyloin condensation reaction between C atoms 2 and 3 of pyruvate and glyceraldehyde 3-phosphate to yield 1-deoxy-D-xylulose-5-phosphate (DXP). This Polaromonas naphthalenivorans (strain CJ2) protein is 1-deoxy-D-xylulose-5-phosphate synthase.